Consider the following 299-residue polypeptide: Exosome complex component rrp42 (299 aa).

Belongs to the RNase PH family. As to quaternary structure, component of the RNA exosome complex. Specifically part of the catalytically inactive RNA exosome core complex (Exo-9) which may associate with the catalytic subunits rrp6 and dis3 in cytoplasmic- and nuclear-specific RNA exosome complex forms. Exo-9 is formed by a hexameric base ring of RNase PH domain-containing subunits and a cap ring consisting of csl4, rrp4 and rrp40.

It is found in the cytoplasm. The protein localises to the nucleus. Its subcellular location is the nucleolus. In terms of biological role, non-catalytic component of the RNA exosome complex which has 3'-&gt;5' exoribonuclease activity and participates in a multitude of cellular RNA processing and degradation events. In the nucleus, the RNA exosome complex is involved in proper maturation of stable RNA species such as rRNA, snRNA and snoRNA, in the elimination of RNA processing by-products and non-coding 'pervasive' transcripts, such as antisense RNA species and cryptic unstable transcripts (CUTs), and of mRNAs with processing defects, thereby limiting or excluding their export to the cytoplasm. In the cytoplasm, the RNA exosome complex is involved in general mRNA turnover and in RNA surveillance pathways, preventing translation of aberrant mRNAs. The catalytic inactive RNA exosome core complex of 9 subunits (Exo-9) is proposed to play a pivotal role in the binding and presentation of RNA for ribonucleolysis, and to serve as a scaffold for the association with catalytic subunits and accessory proteins or complexes. ski6 is part of the hexameric ring of RNase PH domain-containing subunits proposed to form a central channel which threads RNA substrates for degradation. This chain is Exosome complex component rrp42 (rrp42), found in Schizosaccharomyces pombe (strain 972 / ATCC 24843) (Fission yeast).